The chain runs to 536 residues: Nuclear hormone receptor family member nhr-7 (536 aa).

A DNA-binding region (nuclear receptor) is located at residues 6–82 (NRICAVCGDT…VGMNPDYVRP (77 aa)). 2 NR C4-type zinc fingers span residues 9–29 (CAVC…CFGC) and 46–70 (CRFE…FRKC). One can recognise an NR LBD domain in the interval 155 to 378 (ADRSLARKTG…PFHKILTDII (224 aa)). The segment at 427–465 (SPCQISAPPPPQQQYTDYSQMPSTSSYPANSSPFQSPYR) is disordered. Polar residues predominate over residues 439-465 (QQYTDYSQMPSTSSYPANSSPFQSPYR).

This sequence belongs to the nuclear hormone receptor family.

It localises to the nucleus. In terms of biological role, orphan nuclear receptor. This Caenorhabditis elegans protein is Nuclear hormone receptor family member nhr-7 (nhr-7).